Here is a 284-residue protein sequence, read N- to C-terminus: Glutamate 5-kinase 2 (284 aa).

ATP is bound at residue lysine 26. Substrate contacts are provided by serine 67, aspartate 154, and asparagine 166. Residues 186-187 (SD) and 228-234 (SGGMVTK) contribute to the ATP site.

The protein belongs to the glutamate 5-kinase family.

Its subcellular location is the cytoplasm. It carries out the reaction L-glutamate + ATP = L-glutamyl 5-phosphate + ADP. Its pathway is amino-acid biosynthesis; L-proline biosynthesis; L-glutamate 5-semialdehyde from L-glutamate: step 1/2. Functionally, catalyzes the transfer of a phosphate group to glutamate to form L-glutamate 5-phosphate. This Mesorhizobium japonicum (strain LMG 29417 / CECT 9101 / MAFF 303099) (Mesorhizobium loti (strain MAFF 303099)) protein is Glutamate 5-kinase 2.